Consider the following 440-residue polypeptide: Ribulose bisphosphate carboxylase large chain (440 aa).

An N6,N6,N6-trimethyllysine modification is found at Lys4. 2 residues coordinate substrate: Asn113 and Thr163. The active-site Proton acceptor is Lys165. Substrate is bound at residue Lys167. Mg(2+) contacts are provided by Lys191, Asp193, and Glu194. Lys191 is subject to N6-carboxylysine. The active-site Proton acceptor is His284. Arg285, His317, and Ser369 together coordinate substrate.

This sequence belongs to the RuBisCO large chain family. Type I subfamily. In terms of assembly, heterohexadecamer of 8 large chains and 8 small chains; disulfide-linked. The disulfide link is formed within the large subunit homodimers. It depends on Mg(2+) as a cofactor. The disulfide bond which can form in the large chain dimeric partners within the hexadecamer appears to be associated with oxidative stress and protein turnover.

It localises to the plastid. Its subcellular location is the chloroplast. It catalyses the reaction 2 (2R)-3-phosphoglycerate + 2 H(+) = D-ribulose 1,5-bisphosphate + CO2 + H2O. The enzyme catalyses D-ribulose 1,5-bisphosphate + O2 = 2-phosphoglycolate + (2R)-3-phosphoglycerate + 2 H(+). In terms of biological role, ruBisCO catalyzes two reactions: the carboxylation of D-ribulose 1,5-bisphosphate, the primary event in carbon dioxide fixation, as well as the oxidative fragmentation of the pentose substrate in the photorespiration process. Both reactions occur simultaneously and in competition at the same active site. This Onoclea sensibilis (Sensitive fern) protein is Ribulose bisphosphate carboxylase large chain.